The chain runs to 323 residues: Phosphoribosylformylglycinamidine cyclo-ligase (323 aa).

The protein belongs to the AIR synthase family.

The protein localises to the cytoplasm. The catalysed reaction is 2-formamido-N(1)-(5-O-phospho-beta-D-ribosyl)acetamidine + ATP = 5-amino-1-(5-phospho-beta-D-ribosyl)imidazole + ADP + phosphate + H(+). It functions in the pathway purine metabolism; IMP biosynthesis via de novo pathway; 5-amino-1-(5-phospho-D-ribosyl)imidazole from N(2)-formyl-N(1)-(5-phospho-D-ribosyl)glycinamide: step 2/2. The protein is Phosphoribosylformylglycinamidine cyclo-ligase of Saccharolobus solfataricus (strain ATCC 35092 / DSM 1617 / JCM 11322 / P2) (Sulfolobus solfataricus).